Here is a 692-residue protein sequence, read N- to C-terminus: Elongation factor G (692 aa).

The region spanning 8-283 (EDYRNFGIMA…AVVDYLPSPL (276 aa)) is the tr-type G domain. GTP-binding positions include 17-24 (AHIDAGKT), 81-85 (DTPGH), and 135-138 (NKMD).

It belongs to the TRAFAC class translation factor GTPase superfamily. Classic translation factor GTPase family. EF-G/EF-2 subfamily.

It is found in the cytoplasm. Catalyzes the GTP-dependent ribosomal translocation step during translation elongation. During this step, the ribosome changes from the pre-translocational (PRE) to the post-translocational (POST) state as the newly formed A-site-bound peptidyl-tRNA and P-site-bound deacylated tRNA move to the P and E sites, respectively. Catalyzes the coordinated movement of the two tRNA molecules, the mRNA and conformational changes in the ribosome. The sequence is that of Elongation factor G from Caulobacter sp. (strain K31).